A 60-amino-acid polypeptide reads, in one-letter code: Large ribosomal subunit protein bL33 (60 aa).

It belongs to the bacterial ribosomal protein bL33 family.

The protein is Large ribosomal subunit protein bL33 of Chlorobium chlorochromatii (strain CaD3).